Consider the following 156-residue polypeptide: MDINITLIGQMITFAIFVGFTMKFVWPPLRKALEERREKIAEGLASADRASRELEVAKRQSAEILREAKAKATEIIENAYVRAHKVDEQAKEEAIAAADKIKSMAIAEIEQEKVKAKEQLKQELVNLAMAAASKIIAASVDEKASKKVLEDFVEKV.

Residues 5–27 form a helical membrane-spanning segment; it reads ITLIGQMITFAIFVGFTMKFVWP.

Belongs to the ATPase B chain family. As to quaternary structure, F-type ATPases have 2 components, F(1) - the catalytic core - and F(0) - the membrane proton channel. F(1) has five subunits: alpha(3), beta(3), gamma(1), delta(1), epsilon(1). F(0) has three main subunits: a(1), b(2) and c(10-14). The alpha and beta chains form an alternating ring which encloses part of the gamma chain. F(1) is attached to F(0) by a central stalk formed by the gamma and epsilon chains, while a peripheral stalk is formed by the delta and b chains.

The protein localises to the cell inner membrane. Functionally, f(1)F(0) ATP synthase produces ATP from ADP in the presence of a proton or sodium gradient. F-type ATPases consist of two structural domains, F(1) containing the extramembraneous catalytic core and F(0) containing the membrane proton channel, linked together by a central stalk and a peripheral stalk. During catalysis, ATP synthesis in the catalytic domain of F(1) is coupled via a rotary mechanism of the central stalk subunits to proton translocation. In terms of biological role, component of the F(0) channel, it forms part of the peripheral stalk, linking F(1) to F(0). In Francisella tularensis subsp. tularensis (strain WY96-3418), this protein is ATP synthase subunit b.